Consider the following 197-residue polypeptide: Protein-S-isoprenylcysteine O-methyltransferase B (197 aa).

Helical transmembrane passes span 16–36 (MFLA…AIHG), 52–72 (ALAM…FPGL), and 81–101 (FGLT…ITAG). Residues 116–119 (HKLV), Tyr-124, and 129–132 (HPSY) each bind S-adenosyl-L-methionine. The chain crosses the membrane as a helical span at residues 140 to 160 (VGTQVMLCNPISAIAFAVVVW). Residue Arg-166 coordinates substrate. Glu-170 lines the S-adenosyl-L-methionine pocket.

The protein belongs to the class VI-like SAM-binding methyltransferase superfamily. Isoprenylcysteine carboxyl methyltransferase family. Zn(2+) is required as a cofactor. As to expression, expressed in flowers, stems, leaves, roots and siliques. Detected in apices and vascular tissues of leaves and roots, in the stigma and in the filaments and anthers of stamen. Not found in petioles or hypocotyls.

It localises to the endoplasmic reticulum membrane. It catalyses the reaction [protein]-C-terminal S-[(2E,6E)-farnesyl]-L-cysteine + S-adenosyl-L-methionine = [protein]-C-terminal S-[(2E,6E)-farnesyl]-L-cysteine methyl ester + S-adenosyl-L-homocysteine. Its activity is regulated as follows. Inhibited by farnesylthioacetic acid (FTAA) and N-acetyl-S-trans, trans-farnesyl-l-cysteine (AFC). Functionally, catalyzes the post-translational methylation of isoprenylated C-terminal cysteine residues, resulting in the modulation of the function of prenylated proteins. Involved in negative regulation of abscisic acid signaling. Carboxyl methylation is a reversible and potentially regulated step in the post-translational modification of prenylated proteins. This Arabidopsis thaliana (Mouse-ear cress) protein is Protein-S-isoprenylcysteine O-methyltransferase B.